The following is a 526-amino-acid chain: Peptide chain release factor 3 (526 aa).

Positions 8–277 constitute a tr-type G domain; that stretch reads NKRRTFAIIS…GLTEWAPKPQ (270 aa). Residues 17 to 24, 85 to 89, and 139 to 142 contribute to the GTP site; these read SHPDAGKT, DTPGH, and NKLD.

It belongs to the TRAFAC class translation factor GTPase superfamily. Classic translation factor GTPase family. PrfC subfamily.

Its subcellular location is the cytoplasm. Increases the formation of ribosomal termination complexes and stimulates activities of RF-1 and RF-2. It binds guanine nucleotides and has strong preference for UGA stop codons. It may interact directly with the ribosome. The stimulation of RF-1 and RF-2 is significantly reduced by GTP and GDP, but not by GMP. The sequence is that of Peptide chain release factor 3 from Haemophilus ducreyi (strain 35000HP / ATCC 700724).